The sequence spans 876 residues: MHQAYSVHSILKQGVQIESIAAYGNHVILGTRSGQLIMYSVDEETGVDMRMFNKNFSRKPITQMEVIASENLLFVLTDLQVQVCDIRRIESNFAFMHSAPDTKGCTLFTMDVDTPKSTTGRVATVIRVCCAIRRRLVFFFWKEDKLNSLELIIELSDVPRTLCWVGHAVCVGFKDEYVVYDISGKAPKKHNLFLTSSSISRDPCICLIRNNMLGISKDSYLVVVDPSQYKESDGINNSTDVRPAAMDSNSSLTPLLWSSPLLDLVWDEPFAVGRVNNAIEVRSLVGKDTLVQTIPELQKTKFLVHADKGTIFAAATSELWCIRMVEIPIQRQQLLQQKKFQLAIELTQISDEPAADRAQTIRQIHMLYAKELFTNKEFSAAMKEFEKAAIDPYDVIRLFPNLVPEPKPGTEDVTVPTSSTPALEDSDLENAYLALIEYLAWARQREVVKLRDTKSSSKSLLEIIDTTLLKCYLQTNDSLVAPLLRLNQCHLEESEKTLKKHNKISELIILYQMKGKHKEALKLLREQASIEGSVLQGRKRTIRYLQELGGDHLPLIFEFADWVLNDNPEEGLTIFTDELIEVESLPRAKVLDFFISKHKALVIPYLEHVITEWKDGNTLLHNVLLKQYREKVQRLLAQQEKGEEVPELIPMRAKLYKMLEESNDYSPDRLLEEFPTNILLEERALILGRLKKHDNVLSIYIHVLGDVAKATAYAEAHYKEDKHIFHTLIKCILIPPTQPLYDGVPLHPDFSQVNREVALEILNTHATRIDPFEIFEHLPDDMPMPQLEKYLEKSIRKMMADKHEMQMMCGFLEAESTRLENALEEQRNISFELNESSVCSECKKRFQTQSAFVRYPNGHIVHLSCHDRLARAAAQQ.

In terms of domain architecture, CNH spans 14 to 310; it reads GVQIESIAAY…KFLVHADKGT (297 aa). One copy of the CHCR repeat lies at 578–741; it reads ELIEVESLPR…ILIPPTQPLY (164 aa).

This sequence belongs to the VAM6/VPS39 family. Part of the homotypic fusion and vacuole protein sorting (HOPS) complex, composed of Vps16A, car/Vps33A, dor/Vps18, Vps39, Vps11 and lt/Vps41. Interacts with Rab2 (GTP-bound form); the interaction is probably direct.

The protein resides in the cytoplasm. Its subcellular location is the lysosome membrane. The protein localises to the late endosome membrane. It localises to the late endosome. It is found in the lysosome. Its function is as follows. Part of the homotypic fusion and vacuole protein sorting (HOPS) tethering complex involved in endo-lysosomal vesicle trafficking and lysosome biogenesis. The HOPS complex facilitates docking and fusion of lysosomes with late endosomes and several other types of vesicles. The HOPS complex is also involved in autophagy and crinophagy (the elimination of unused secretory granules through their fusion with lysosomes). The HOPS complex mediates autophagocitic flux, probably by binding autophagosome-associated Syx17/syntaxin 17, promoting assembly of the trans-SNARE complex and instigating autophagosome-lysosome fusion. Independent of Syx17/syntaxin 17, HOPS is involved in biosynthetic transport to lysosomes and lysosome-related organelles such as eye-pigment granules. Required for autophagocytosis-dependent remodeling of myofibrils and transverse-tubules (T-tubules) during metamorphosis. The sequence is that of Vacuolar protein sorting-associated protein 39 homolog from Drosophila melanogaster (Fruit fly).